We begin with the raw amino-acid sequence, 198 residues long: Nucleoid occlusion factor SlmA (198 aa).

In terms of domain architecture, HTH tetR-type spans 10–70 (NRREEILQSL…SLIEFIEDSL (61 aa)). The segment at residues 33-52 (TTAKLAASVGVSEAALYRHF) is a DNA-binding region (H-T-H motif). Positions 117 to 144 (EQDRLQGRINQLFERIEAQLRQVLREKR) form a coiled coil.

It belongs to the nucleoid occlusion factor SlmA family. In terms of assembly, homodimer. Interacts with FtsZ.

It is found in the cytoplasm. The protein localises to the nucleoid. Required for nucleoid occlusion (NO) phenomenon, which prevents Z-ring formation and cell division over the nucleoid. Acts as a DNA-associated cell division inhibitor that binds simultaneously chromosomal DNA and FtsZ, and disrupts the assembly of FtsZ polymers. SlmA-DNA-binding sequences (SBS) are dispersed on non-Ter regions of the chromosome, preventing FtsZ polymerization at these regions. This chain is Nucleoid occlusion factor SlmA, found in Salmonella paratyphi A (strain ATCC 9150 / SARB42).